Reading from the N-terminus, the 299-residue chain is 4-hydroxy-tetrahydrodipicolinate synthase (299 aa).

Thr-44 serves as a coordination point for pyruvate. Catalysis depends on Tyr-133, which acts as the Proton donor/acceptor. The active-site Schiff-base intermediate with substrate is Lys-162. Ile-204 is a pyruvate binding site.

This sequence belongs to the DapA family. As to quaternary structure, homotetramer; dimer of dimers.

The protein localises to the cytoplasm. The catalysed reaction is L-aspartate 4-semialdehyde + pyruvate = (2S,4S)-4-hydroxy-2,3,4,5-tetrahydrodipicolinate + H2O + H(+). The protein operates within amino-acid biosynthesis; L-lysine biosynthesis via DAP pathway; (S)-tetrahydrodipicolinate from L-aspartate: step 3/4. Its function is as follows. Catalyzes the condensation of (S)-aspartate-beta-semialdehyde [(S)-ASA] and pyruvate to 4-hydroxy-tetrahydrodipicolinate (HTPA). The chain is 4-hydroxy-tetrahydrodipicolinate synthase from Thermus thermophilus (strain ATCC 27634 / DSM 579 / HB8).